The following is a 207-amino-acid chain: Guanylate kinase (207 aa).

One can recognise a Guanylate kinase-like domain in the interval 5–184 (GNLFIVSAPS…ALADLRAIIR (180 aa)). 12-19 (APSGAGKS) is an ATP binding site.

This sequence belongs to the guanylate kinase family.

The protein resides in the cytoplasm. The catalysed reaction is GMP + ATP = GDP + ADP. Its function is as follows. Essential for recycling GMP and indirectly, cGMP. In Shewanella oneidensis (strain ATCC 700550 / JCM 31522 / CIP 106686 / LMG 19005 / NCIMB 14063 / MR-1), this protein is Guanylate kinase.